A 249-amino-acid chain; its full sequence is Glucosamine-6-phosphate deaminase 2 (249 aa).

The active-site Proton acceptor; for enolization step is Asp-67. The active-site For ring-opening step is the Asn-136. Residue His-138 is the Proton acceptor; for ring-opening step of the active site. Glu-143 (for ring-opening step) is an active-site residue.

It belongs to the glucosamine/galactosamine-6-phosphate isomerase family. NagB subfamily.

The enzyme catalyses alpha-D-glucosamine 6-phosphate + H2O = beta-D-fructose 6-phosphate + NH4(+). It functions in the pathway amino-sugar metabolism; N-acetylneuraminate degradation; D-fructose 6-phosphate from N-acetylneuraminate: step 5/5. In terms of biological role, catalyzes the reversible isomerization-deamination of glucosamine 6-phosphate (GlcN6P) to form fructose 6-phosphate (Fru6P) and ammonium ion. Required for growth on glucosamine and also provides the majority of GlcN6P deaminase activity during growth on N-acetylglucosamine (GlcNAc). In Bacillus subtilis (strain 168), this protein is Glucosamine-6-phosphate deaminase 2.